Consider the following 384-residue polypeptide: MKRKIIHVDMDAFFASIEQQDNPEYRGKPVIVGGLSGRGVVSTCSYEARKYGIHSAMPMYMAKKLCPQGIFLPVRRKRYEEVSEQIFRILYDITPFVEPVSIDEAYLDVTHVDKNPEDIALEIKKRVKDATGLTVSVGISYNKFLAKLASDWNKPDGLMVITEDMVPEILKPLPVTKVHGIGEKSAEKLRSIGIETVEDLLKLPQENLIELFGKTGVEIYNRIRGIDERPVETMREIKSIGKEKTLEKDTKNKELLIQHLKEFSEIVSEELIKERLYCRTVTVKIKTADFAVHTKSKTVDKYIRFSEDIYEVAKGILEEWKLEQYVRLIGLSVSNLSPVKYEQLSFLDKRLVKVIKAGNLAEEINKRIGKKIIKKGSELLKDNK.

A UmuC domain is found at 5-182 (IIHVDMDAFF…LPVTKVHGIG (178 aa)). Residues Asp9, Met10, and Asp103 each contribute to the Mg(2+) site. Residue Glu104 is part of the active site.

It belongs to the DNA polymerase type-Y family. In terms of assembly, monomer. The cofactor is Mg(2+).

It is found in the cytoplasm. The enzyme catalyses DNA(n) + a 2'-deoxyribonucleoside 5'-triphosphate = DNA(n+1) + diphosphate. In terms of biological role, poorly processive, error-prone DNA polymerase involved in translesion repair and untargeted mutagenesis. Copies undamaged DNA at stalled replication forks, which arise in vivo from mismatched or misaligned primer ends. These misaligned primers can be extended by PolIV. Exhibits no 3'-5' exonuclease (proofreading) activity. Involved in translesional synthesis. Primer extension fidelity in vitro is temperature-dependent. Inserts a correct base opposite templating bases at 70 degrees Celsius, but at 37 degrees Celsius in addition to correct base pairing, base transitions, transversions and frameshifts can occur. Preferably forms erroneous base pairs C:T. Bypasses 8-oxo-dG oxidative damage by incorporating dATP or dCTP opposite of the damaged DNA template site at both temperatures in vitro. The protein is DNA polymerase IV of Caldanaerobacter subterraneus subsp. tengcongensis (strain DSM 15242 / JCM 11007 / NBRC 100824 / MB4) (Thermoanaerobacter tengcongensis).